Here is a 949-residue protein sequence, read N- to C-terminus: Syndetin (949 aa).

A disordered region spans residues 1-28; it reads MQKIKSLMTRQGLRSPQESVHDLSPIEN. Polar residues predominate over residues 8–18; that stretch reads MTRQGLRSPQE. 2 coiled-coil regions span residues 82 to 104 and 198 to 226; these read SLQE…LERV and YSCI…LSKI. A disordered region spans residues 509–581; it reads FEIQADSKDD…ETLRSRKKSD (73 aa). The span at 569 to 581 shows a compositional bias: basic and acidic residues; it reads VSRETLRSRKKSD.

This sequence belongs to the syndetin family. Component of the endosome-associated retrograde protein (EARP) complex.

The protein localises to the recycling endosome. It localises to the membrane. In terms of biological role, acts as a component of the EARP complex that is involved in endocytic recycling. The EARP complex associates with Rab4-positive endosomes and promotes recycling of internalized transferrin receptor (TFRC) to the plasma membrane. In Gallus gallus (Chicken), this protein is Syndetin.